A 910-amino-acid chain; its full sequence is Protein kinase 3 (910 aa).

Over residues 119–129 the composition is skewed to gly residues; sequence SPSGGGGGGSG. Disordered stretches follow at residues 119-239, 270-295, and 391-454; these read SPSG…PNLI, FNNN…KTPT, and NKDD…NDKK. 6 stretches are compositionally biased toward low complexity: residues 130–160, 169–196, 209–220, 227–239, 270–290, and 422–450; these read VSSN…QPTS, LSES…QSTS, GLSGSSTSSSSA, NNNA…PNLI, FNNN…TTST, and INQP…TSQT. One can recognise a Protein kinase domain in the interval 498–763; sequence FELLKVLGVG…FEEISSHPFF (266 aa). ATP is bound by residues 504-512 and K527; that span reads LGVGSFGRV. D621 acts as the Proton acceptor in catalysis. A Phosphothreonine; by autocatalysis modification is found at T664. The AGC-kinase C-terminal domain maps to 764-854; that stretch reads ELIPWRMLES…NKEEEDGIMG (91 aa). Disordered stretches follow at residues 786–812 and 859–910; these read EISL…TLSC and IGSI…KGSV. 2 stretches are compositionally biased toward low complexity: residues 788–809 and 859–886; these read SLPN…NNLT and IGSI…SGGS.

The protein belongs to the protein kinase superfamily. AGC Ser/Thr protein kinase family.

It carries out the reaction L-seryl-[protein] + ATP = O-phospho-L-seryl-[protein] + ADP + H(+). The enzyme catalyses L-threonyl-[protein] + ATP = O-phospho-L-threonyl-[protein] + ADP + H(+). In Dictyostelium discoideum (Social amoeba), this protein is Protein kinase 3 (pkgC).